Reading from the N-terminus, the 622-residue chain is Palmitoyltransferase pfa3 (622 aa).

The Cytoplasmic segment spans residues 1–38 (MDATPYTTSSTSTALDSPSSLSATMARRWARKLERYCC). Residues 39-59 (TCVTYFPLAFVYSMTSWAAYV) traverse the membrane as a helical segment. The Vacuolar portion of the chain corresponds to 60–76 (DVSLSTTPSRVTWLGHS). Residues 77-97 (YGFIAVVLYLLANWCYTYAVF) form a helical membrane-spanning segment. The Cytoplasmic segment spans residues 98–175 (TSPGSTTNEY…ATCVGLRNHK (78 aa)). One can recognise a DHHC domain in the interval 132 to 182 (RFCKKCQARKPDRAHHCSTCRRCVLKMDHHCPWLATCVGLRNHKAFLLFLI). Residues 176–196 (AFLLFLIYTSVFCWVSFAGSA) traverse the membrane as a helical segment. Over 197-217 (SWVWEEIMSNTTYVETLMPVN) the chain is Vacuolar. A helical transmembrane segment spans residues 218 to 238 (YIMLSVISGIIGIVLSAFCGW). At 239–622 (HIYLASRGQT…EGRSNDDGVD (384 aa)) the chain is on the cytoplasmic side. Disordered stretches follow at residues 298–334 (PGVT…ELQA), 419–507 (REEQ…YADD), and 533–622 (DDVL…DGVD). Over residues 302–311 (RPEEGEEMRR) the composition is skewed to basic and acidic residues. The segment covering 313–330 (TTPSGSSQRNDLASQHNP) has biased composition (polar residues). The span at 419–428 (REEQRQRERQ) shows a compositional bias: basic and acidic residues. Residues 443–455 (YTPTWTPPNQQHP) are compositionally biased toward polar residues. Low complexity predominate over residues 466–488 (PSSQPQTQRNSNSSSPSFTPSRR). Over residues 533-547 (DDVLNDDDDDDEDYF) the composition is skewed to acidic residues. The segment covering 610 to 622 (NGEEGRSNDDGVD) has biased composition (basic and acidic residues).

The protein belongs to the DHHC palmitoyltransferase family. PFA3 subfamily. In terms of processing, autopalmitoylated.

It is found in the vacuole membrane. The catalysed reaction is L-cysteinyl-[protein] + hexadecanoyl-CoA = S-hexadecanoyl-L-cysteinyl-[protein] + CoA. Its function is as follows. Palmitoyltransferase specific for vac8. Palmitoylates vac8 at one or more of its N-terminal cysteine residues, which is required for its proper membrane localization. This chain is Palmitoyltransferase pfa3 (ptr-3), found in Neurospora crassa (strain ATCC 24698 / 74-OR23-1A / CBS 708.71 / DSM 1257 / FGSC 987).